We begin with the raw amino-acid sequence, 840 residues long: Probable alpha-glucuronidase A (840 aa).

The N-terminal stretch at 1-19 (MWSGIPVFALLSSIGIAAA) is a signal peptide. Residues Asn50, Asn149, Asn222, Asn262, Asn279, Asn310, Asn465, Asn527, Asn576, Asn610, Asn682, Asn723, and Asn732 are each glycosylated (N-linked (GlcNAc...) asparagine).

The protein belongs to the glycosyl hydrolase 67 family.

Its subcellular location is the secreted. The enzyme catalyses an alpha-D-glucuronoside + H2O = D-glucuronate + an alcohol. Alpha-glucuronidase involved in the hydrolysis of xylan, a major structural heterogeneous polysaccharide found in plant biomass representing the second most abundant polysaccharide in the biosphere, after cellulose. Releases 4-O-methylglucuronic acid from xylan. This chain is Probable alpha-glucuronidase A (aguA), found in Neosartorya fischeri (strain ATCC 1020 / DSM 3700 / CBS 544.65 / FGSC A1164 / JCM 1740 / NRRL 181 / WB 181) (Aspergillus fischerianus).